A 106-amino-acid polypeptide reads, in one-letter code: UPF0060 membrane protein Bxeno_B1021 (106 aa).

4 helical membrane-spanning segments follow: residues 2–22 (KTFL…YLPW), 30–50 (SIWL…LLTL), 58–78 (VYAA…WCVD), and 82–102 (PTLW…IIAF).

This sequence belongs to the UPF0060 family.

The protein localises to the cell inner membrane. This chain is UPF0060 membrane protein Bxeno_B1021, found in Paraburkholderia xenovorans (strain LB400).